We begin with the raw amino-acid sequence, 323 residues long: Acetyl-coenzyme A carboxylase carboxyl transferase subunit alpha (323 aa).

Positions 39–293 (RLSKKSQQLT…RRALADSLRQ (255 aa)) constitute a CoA carboxyltransferase C-terminal domain.

The protein belongs to the AccA family. In terms of assembly, acetyl-CoA carboxylase is a heterohexamer composed of biotin carboxyl carrier protein (AccB), biotin carboxylase (AccC) and two subunits each of ACCase subunit alpha (AccA) and ACCase subunit beta (AccD).

The protein localises to the cytoplasm. The catalysed reaction is N(6)-carboxybiotinyl-L-lysyl-[protein] + acetyl-CoA = N(6)-biotinyl-L-lysyl-[protein] + malonyl-CoA. It functions in the pathway lipid metabolism; malonyl-CoA biosynthesis; malonyl-CoA from acetyl-CoA: step 1/1. Component of the acetyl coenzyme A carboxylase (ACC) complex. First, biotin carboxylase catalyzes the carboxylation of biotin on its carrier protein (BCCP) and then the CO(2) group is transferred by the carboxyltransferase to acetyl-CoA to form malonyl-CoA. This chain is Acetyl-coenzyme A carboxylase carboxyl transferase subunit alpha, found in Burkholderia orbicola (strain AU 1054).